We begin with the raw amino-acid sequence, 222 residues long: Noggin (222 aa).

The signal sequence occupies residues Met-1–Leu-19. Asn-61 carries N-linked (GlcNAc...) asparagine glycosylation. 4 cysteine pairs are disulfide-bonded: Cys-145–Cys-182, Cys-168–Cys-218, Cys-174–Cys-220, and Cys-197–Cys-205.

Belongs to the noggin family. As to quaternary structure, homodimer.

It localises to the secreted. Functionally, patterns the embryo by interrupting bone morphogenetic proteins (BMP) signaling. Binds BMP-4 and BMP-2 with high affinity. Can abolish BMP-4 activity by blocking binding to cognate cell-surface receptors. Capable of inducing dorsal development in embryos. Causes dorsal mesodermal differentiation of animal cap ectoderm when coexpressed with xWNT-8 and nuclear, sequence-specific DNA-binding protein xBRA. None of these molecules causes dorsal mesoderm formation when expressed alone. The chain is Noggin (nog) from Xenopus laevis (African clawed frog).